A 344-amino-acid polypeptide reads, in one-letter code: GTPase Obg (344 aa).

Positions 1 to 159 (MKFLDQAKVY…RWIWLRLKLI (159 aa)) constitute an Obg domain. The OBG-type G domain occupies 160–327 (ADAGLVGLPN…ALRLLLSVVE (168 aa)). GTP is bound by residues 166–173 (GLPNAGKS), 191–195 (FTTLH), 212–215 (DIPG), 279–282 (SKVD), and 308–310 (SAQ). 2 residues coordinate Mg(2+): S173 and T193.

Belongs to the TRAFAC class OBG-HflX-like GTPase superfamily. OBG GTPase family. Monomer. Requires Mg(2+) as cofactor.

It is found in the cytoplasm. In terms of biological role, an essential GTPase which binds GTP, GDP and possibly (p)ppGpp with moderate affinity, with high nucleotide exchange rates and a fairly low GTP hydrolysis rate. Plays a role in control of the cell cycle, stress response, ribosome biogenesis and in those bacteria that undergo differentiation, in morphogenesis control. This is GTPase Obg from Xanthobacter autotrophicus (strain ATCC BAA-1158 / Py2).